Consider the following 377-residue polypeptide: DnaJ-related protein SCJ1 (377 aa).

Residues 1–21 form the signal peptide; the sequence is MIPKLYIHLILSLLLLPLILA. A J domain is found at 23 to 88; that stretch reads DYYAILEIDK…EKKKIYDQFG (66 aa). The CR-type zinc finger occupies 156 to 237; the sequence is GSSIEFTLNL…CHGKKVTKKN (82 aa). CXXCXGXG motif repeat units follow at residues 169–176, 185–192, 211–218, and 225–232; these read CDACHGSG, CPDCQGRG, CGRCGGTG, and CKTCHGKK. A Cell attachment site motif is present at residues 288-290; it reads RGD. The Prevents secretion from ER signature appears at 374-377; that stretch reads KDEL.

It is found in the endoplasmic reticulum lumen. Its function is as follows. Regulates protein folding in the endoplasmic reticulum lumen. Probably acts as a J-protein for the Hsp70-type chaperone KAR2 by stimulating its ATP-dependent reaction cycle and initiating folding reactions. Also involved in the endoplasmic reticulum-associated degradation (ERAD) process. Cooperates with KAR2 and another J-protein JEM1 to facilitate the export of ERAD substrates to the cytoplasm by maintaining them in a translocation-competent state and preventing their aggregation in the endoplasmic reticulum lumen. This Saccharomyces cerevisiae (strain ATCC 204508 / S288c) (Baker's yeast) protein is DnaJ-related protein SCJ1 (SCJ1).